A 620-amino-acid chain; its full sequence is Glutathione-regulated potassium-efflux system protein KefC (620 aa).

At Met1–Ser3 the chain is on the periplasmic side. Residues His4 to Val24 traverse the membrane as a helical segment. Residue Arg25 is a topological domain, cytoplasmic. Residues Leu26 to Leu46 traverse the membrane as a helical segment. The Periplasmic portion of the chain corresponds to Arg47–Glu53. A helical transmembrane segment spans residues Ser54–Leu74. Residues Asp75–Gly89 are Cytoplasmic-facing. A helical transmembrane segment spans residues Gly90–Leu110. The Periplasmic segment spans residues Arg111–Gln113. A helical transmembrane segment spans residues Val114 to Met134. Residues Asn135–Ala148 are Cytoplasmic-facing. A helical transmembrane segment spans residues Phe149–Leu169. At Ala170–Thr177 the chain is on the periplasmic side. Residues Leu178–Leu198 traverse the membrane as a helical segment. The Cytoplasmic segment spans residues Gly199 to Ser213. A helical transmembrane segment spans residues Gly214 to Leu233. Residues Leu234–Glu236 are Periplasmic-facing. The helical transmembrane segment at Val237 to Ser254 threads the bilayer. The Cytoplasmic portion of the chain corresponds to Ser255–Lys269. Residues Gly270–Val290 traverse the membrane as a helical segment. The Periplasmic segment spans residues Glu291–Pro293. The helical transmembrane segment at Leu294–Val314 threads the bilayer. The Cytoplasmic portion of the chain corresponds to Ala315–Arg326. A helical membrane pass occupies residues Trp327–Gln347. Residues Met348–Lys358 are Periplasmic-facing. The helical transmembrane segment at Ala359–Thr379 threads the bilayer. The Cytoplasmic portion of the chain corresponds to Arg380 to Ile620. Residues Gln399–Thr518 form the RCK N-terminal domain. The tract at residues Gln599–Ile620 is disordered. Residues Glu603–Ile620 are compositionally biased toward basic and acidic residues.

The protein belongs to the monovalent cation:proton antiporter 2 (CPA2) transporter (TC 2.A.37) family. KefC subfamily. Homodimer. Interacts with the regulatory subunit KefF.

It localises to the cell inner membrane. In terms of biological role, pore-forming subunit of a potassium efflux system that confers protection against electrophiles. Catalyzes K(+)/H(+) antiport. This Salmonella typhi protein is Glutathione-regulated potassium-efflux system protein KefC.